A 771-amino-acid polypeptide reads, in one-letter code: U3 small nucleolar RNA-associated protein 14 homolog A (771 aa).

The tract at residues 23-49 is disordered; sequence PKDYLLSESEDEGDNDGERKHQKLLEA. Serine 29, serine 31, serine 52, serine 77, and serine 81 each carry phosphoserine. Residues 40–67 are a coiled coil; that stretch reads ERKHQKLLEAISSLDGKNRRKLAERSEA. A Glycyl lysine isopeptide (Lys-Gly) (interchain with G-Cter in SUMO2) cross-link involves residue lysine 122. Position 205 is a phosphothreonine (threonine 205). Coiled coils occupy residues 216-290 and 317-347; these read SLEE…EKAR and LEARQAMQEQLSKNKELTQKLQVASESEEEE. Disordered stretches follow at residues 334-355 and 367-557; these read TQKLQVASESEEEEGGTEDVEE and MNAD…KKEQ. The segment covering 342–355 has biased composition (acidic residues); that stretch reads ESEEEEGGTEDVEE. The segment covering 399 to 436 has biased composition (basic and acidic residues); that stretch reads LEAHGVSESEGEERPVAEEEILLREFEERRSLRKRSEL. A phosphoserine mark is found at serine 405 and serine 407. Residue arginine 433 is modified to Citrulline. 2 positions are modified to phosphoserine: serine 437 and serine 445. A Glycyl lysine isopeptide (Lys-Gly) (interchain with G-Cter in SUMO2) cross-link involves residue lysine 449. Serine 453 carries the post-translational modification Phosphoserine. A compositionally biased stretch (basic and acidic residues) spans 504–529; it reads RPERVQTLEELEELGKEECFQNKELP. Lysine 519 is covalently cross-linked (Glycyl lysine isopeptide (Lys-Gly) (interchain with G-Cter in SUMO2)). The span at 535–544 shows a compositional bias: polar residues; that stretch reads GQQSERTPNN. Basic and acidic residues predominate over residues 547–557; it reads DAPKEKKKKEQ. Serine 569 carries the post-translational modification Phosphoserine. A Citrulline modification is found at arginine 589. Lysine 733 is covalently cross-linked (Glycyl lysine isopeptide (Lys-Gly) (interchain with G-Cter in SUMO2)). Positions 740–751 are enriched in polar residues; sequence RSSSRSDLSVIQ. The tract at residues 740–771 is disordered; sequence RSSSRSDLSVIQRNPKRITTRHKKQLKKCSVD. A compositionally biased stretch (basic residues) spans 753–771; that stretch reads NPKRITTRHKKQLKKCSVD.

The protein belongs to the UTP14 family. In terms of assembly, interacts with DHX37. In terms of processing, citrullinated by PADI4. As to expression, ubiquitously expressed.

The protein resides in the nucleus. Its subcellular location is the nucleolus. May be required for ribosome biogenesis. In Homo sapiens (Human), this protein is U3 small nucleolar RNA-associated protein 14 homolog A (UTP14A).